The following is a 541-amino-acid chain: Atlastin-3 (541 aa).

The N-terminal hypervariable region (HVR) stretch occupies residues 1-25 (MLSPQRVAAAASRGADDAMESSKPG). Topologically, residues 1–445 (MLSPQRVAAA…NVFSTFRTPA (445 aa)) are cytoplasmic. A GB1/RHD3-type G domain is found at 57-305 (DLDVVVVSVA…LIPYVLNPSK (249 aa)). The GDP site is built by Arg70, Lys71, Gly72, Lys73, Ser74, Phe75, and Arg109. Mg(2+) is bound at residue Asp142. GDP-binding residues include Arg213, Asp214, Val272, and Ser275. Residues 343–434 (MLQATAEANN…YENFCKHNGS (92 aa)) form a 3HB (three-helix bundle) domain region. The residue at position 391 (Lys391) is an N6-acetyllysine. A helical membrane pass occupies residues 446 to 466 (VLFTGIVALYIASGLTGFIGL). A topological domain (lumenal) is located at residue Glu467. Residues 468–488 (VVAQLFNCMVGLLLIALLTWG) traverse the membrane as a helical segment. Residues 489–541 (YIRYSGQYRELGGAIDFGAAYVLEQASSHIGNSTQATVRDAVVGRPSMDKKAQ) are Cytoplasmic-facing. Residue Ser535 is modified to Phosphoserine.

It belongs to the TRAFAC class dynamin-like GTPase superfamily. GB1/RHD3 GTPase family. GB1 subfamily. In terms of assembly, monomeric and homodimeric. The homodimer, transiently formed by two molecules on opposing membranes, is the active form mediating ER membrane fusion. Interacts with ZFYVE27; both proteins are involved in endoplasmic reticulum tubular network organization. Interacts with REEP5; both proteins are involved in endoplasmic reticulum tubular network organization. Expressed in the central nervous system and in dorsal root ganglia neurons. Expressed in peripheral tissues (at protein level).

It localises to the endoplasmic reticulum membrane. The catalysed reaction is GTP + H2O = GDP + phosphate + H(+). In terms of biological role, atlastin-3 (ATL3) is a membrane-anchored GTPase that mediates the GTP-dependent fusion of endoplasmic reticulum (ER) membranes, maintaining the continuous ER network. It facilitates the formation of three-way junctions where ER tubules intersect. Two atlastin-3 on neighboring ER tubules bind GTP and form loose homodimers through the GB1/RHD3-type G domains and 3HB regions. Upon GTP hydrolysis, the 3HB regions tighten, pulling the membranes together to drive their fusion. After fusion, the homodimer disassembles upon release of inorganic phosphate (Pi). Subsequently, GDP dissociates, resetting the monomers to a conformation ready for a new fusion cycle. The sequence is that of Atlastin-3 from Homo sapiens (Human).